Consider the following 84-residue polypeptide: RNA-binding protein Hfq (84 aa).

The 61-residue stretch at D11–I71 folds into the Sm domain.

This sequence belongs to the Hfq family. As to quaternary structure, homohexamer.

Functionally, RNA chaperone that binds small regulatory RNA (sRNAs) and mRNAs to facilitate mRNA translational regulation in response to envelope stress, environmental stress and changes in metabolite concentrations. Also binds with high specificity to tRNAs. The chain is RNA-binding protein Hfq from Beijerinckia indica subsp. indica (strain ATCC 9039 / DSM 1715 / NCIMB 8712).